Consider the following 98-residue polypeptide: NADH-ubiquinone oxidoreductase chain 4L (98 aa).

The next 3 membrane-spanning stretches (helical) occupy residues 1-21 (MSLTYMNMFMAFTISLLGLLL), 29-49 (SLLCLEGMMLSLFVMMTMVIL), and 61-81 (IILLVFAACEAALGLSLLVMV).

The protein belongs to the complex I subunit 4L family. In terms of assembly, core subunit of respiratory chain NADH dehydrogenase (Complex I) which is composed of 45 different subunits.

It localises to the mitochondrion inner membrane. The enzyme catalyses a ubiquinone + NADH + 5 H(+)(in) = a ubiquinol + NAD(+) + 4 H(+)(out). Core subunit of the mitochondrial membrane respiratory chain NADH dehydrogenase (Complex I) which catalyzes electron transfer from NADH through the respiratory chain, using ubiquinone as an electron acceptor. Part of the enzyme membrane arm which is embedded in the lipid bilayer and involved in proton translocation. The polypeptide is NADH-ubiquinone oxidoreductase chain 4L (MT-ND4L) (Platyrrhinus helleri (Heller's broad-nosed bat)).